The primary structure comprises 332 residues: Decaprenyl-phosphate phosphoribosyltransferase (332 aa).

The span at 1 to 12 (MSEHAAEHHRDT) shows a compositional bias: basic and acidic residues. Positions 1–36 (MSEHAAEHHRDTQNFLTSEPHTTAIEDNKKRQPPKN) are disordered. Helical transmembrane passes span 50–70 (WVKNVLVLAAPLAAGADAIFN) and 74–94 (IIDVAIAFVVFCFGASAIYLV). Residues Lys52 and Tyr92 each coordinate 5-phospho-alpha-D-ribose 1-diphosphate. Mg(2+)-binding residues include Asn95 and Asp99. A 5-phospho-alpha-D-ribose 1-diphosphate-binding site is contributed by Lys109. The next 2 helical transmembrane spans lie at 114 to 134 (IAAGVLPVGMAYGMAVALIAL) and 146 to 166 (VALACVIGVYIALQLGYCFGW). The 5-phospho-alpha-D-ribose 1-diphosphate site is built by Lys167 and Arg184. The next 2 helical transmembrane spans lie at 169–189 (MPVIDIALVSSGFMLRAMAGG) and 190–210 (VAAGIELSQWFLLVAAFGSLF). Residue Lys215 participates in trans,octa-cis-decaprenyl phosphate binding. A run of 3 helical transmembrane segments spans residues 244-264 (FVWTMAATAVVMSYALWGFDL), 273-293 (PWYQISMVPFTIAILRYAAGV), and 310-330 (VLQVLALAWVFCIVMAVYIMP).

The protein belongs to the UbiA prenyltransferase family. DPPR synthase subfamily. Mg(2+) is required as a cofactor.

The protein resides in the cell inner membrane. The enzyme catalyses trans,octa-cis-decaprenyl phosphate + 5-phospho-alpha-D-ribose 1-diphosphate + H(+) = trans,octa-cis-decaprenylphospho-beta-D-ribofuranose 5-phosphate + diphosphate. The protein operates within cell wall biogenesis; cell wall polysaccharide biosynthesis. Involved in the biosynthesis of decaprenylphosphoryl arabinose (DPA) a precursor for arabinan synthesis in mycobacterial cell wall biosynthesis. Catalyzes the transfer of a 5-phosphoribosyl residue from phosphoribose diphosphate (PRPP) to decaprenyl phosphate (DP) to form decaprenylphosphoryl-5-phosphoribose (DPPR). In Corynebacterium glutamicum (strain ATCC 13032 / DSM 20300 / JCM 1318 / BCRC 11384 / CCUG 27702 / LMG 3730 / NBRC 12168 / NCIMB 10025 / NRRL B-2784 / 534), this protein is Decaprenyl-phosphate phosphoribosyltransferase.